We begin with the raw amino-acid sequence, 343 residues long: Ribosomal RNA small subunit methyltransferase C (343 aa).

It belongs to the methyltransferase superfamily. RsmC family. Monomer.

It is found in the cytoplasm. It catalyses the reaction guanosine(1207) in 16S rRNA + S-adenosyl-L-methionine = N(2)-methylguanosine(1207) in 16S rRNA + S-adenosyl-L-homocysteine + H(+). Specifically methylates the guanine in position 1207 of 16S rRNA in the 30S particle. The protein is Ribosomal RNA small subunit methyltransferase C of Shigella sonnei (strain Ss046).